The following is a 525-amino-acid chain: Putative ribose/galactose/methyl galactoside import ATP-binding protein (525 aa).

A disordered region spans residues 1 to 20 (MSGSATASPPAKPDLPSSDG). 2 ABC transporter domains span residues 33–269 (LEIS…VGRE) and 279–523 (KPAG…SGHR). An ATP-binding site is contributed by 65–72 (GENGAGKS).

Belongs to the ABC transporter superfamily. Carbohydrate importer 2 (CUT2) (TC 3.A.1.2) family.

It localises to the cell inner membrane. The enzyme catalyses D-ribose(out) + ATP + H2O = D-ribose(in) + ADP + phosphate + H(+). It carries out the reaction D-galactose(out) + ATP + H2O = D-galactose(in) + ADP + phosphate + H(+). Its function is as follows. Part of an ABC transporter complex involved in carbohydrate import. Could be involved in ribose, galactose and/or methyl galactoside import. Responsible for energy coupling to the transport system. The chain is Putative ribose/galactose/methyl galactoside import ATP-binding protein from Pseudomonas syringae pv. tomato (strain ATCC BAA-871 / DC3000).